A 357-amino-acid chain; its full sequence is Cytochrome c peroxidase, mitochondrial (357 aa).

The transit peptide at 1–23 (MSATALRIAPIASRTFQRRLGYL) directs the protein to the mitochondrion. Catalysis depends on H116, which acts as the Proton acceptor. The segment at 189-212 (PWRSGRTDLPEDMTPDNGRLPDGD) is disordered. H239 contributes to the heme b binding site. W255 (tryptophan radical intermediate) is an active-site residue.

The protein belongs to the peroxidase family. Cytochrome c peroxidase subfamily. Forms a one-to-one complex with cytochrome c. It depends on heme b as a cofactor.

Its subcellular location is the mitochondrion matrix. The protein resides in the mitochondrion intermembrane space. It catalyses the reaction 2 Fe(II)-[cytochrome c] + H2O2 + 2 H(+) = 2 Fe(III)-[cytochrome c] + 2 H2O. Destroys radicals which are normally produced within the cells and which are toxic to biological systems. This Candida glabrata (strain ATCC 2001 / BCRC 20586 / JCM 3761 / NBRC 0622 / NRRL Y-65 / CBS 138) (Yeast) protein is Cytochrome c peroxidase, mitochondrial.